A 388-amino-acid chain; its full sequence is MKRNFPKLIALSLIFSLSITPIANAESNSNIKAKDKRHVQVNVEDKSVPTDVRNLAQKDYLSYVTSLDKIYNKEKASYTLGEPFKIYKFNKKSDGNYYFPVLNTEGNIDYIVTISPKVTKDSSSSSKYTINVSSFLSKALNEYKDQQITILTNSKGYYVVTQNHKAKLVLKTPRLEDKKAKKTESIPTGNNVTQLKQKASVTMPTSQFKSNNYTYNEQYVNKLENFKIRETQGNNGWCAGYTMSALLNATYNTNKYHAEAVMRFLHPNLQGQQFQFTGLTPREMIYFGQTQGRSPQLLNRMTTYNEVDNLTKNNKGIAILGSRVESRNGMHAGHAMAVVGNAKLNNGQEVIIIWNPWDNGFMTQDAKNNVIPVSNGDHYQWYSSIYGY.

The first 25 residues, 1–25 (MKRNFPKLIALSLIFSLSITPIANA), serve as a signal peptide directing secretion. The propeptide occupies 26–214 (ESNSNIKAKD…TSQFKSNNYT (189 aa)). Catalysis depends on residues Cys238, His334, and Asn355.

The protein belongs to the peptidase C47 family. As to quaternary structure, in the cytoplasm, prematurely activated/folded ScpA forms a stable non-covalent complex with ScpB. In terms of processing, cleavage leads to the activation of ScpA probably by an auto-catalytic manner.

The protein localises to the secreted. It catalyses the reaction Broad endopeptidase action on proteins including elastin, but rather limited hydrolysis of small-molecule substrates. Assays are conveniently made with hemoglobin, casein or Z-Phe-Arg-NHMec as substrate.. Prematurely activated/folded staphopain A is inhibited by staphostatin A (ScpB), which is probably required to protect staphylococcal cytoplasmic proteins from degradation by ScpA. Cysteine protease that plays an important role in the inhibition of host innate immune response. Cleaves host elastins found in connective tissues, pulmonary surfactant protein A in the lungs, and the chemokine receptor CXCR2 on leukocytes. Proteolytic cleavage of surfactant protein A impairs bacterial phagocytosis by neutrophils while CXCR2 degradation blocks neutrophil activation and chemotaxis. Additionally, promotes vascular leakage by activating the plasma kallikerin/kinin system, resulting in hypotension. The protein is Staphopain A (sspP) of Staphylococcus aureus (strain MRSA252).